A 568-amino-acid chain; its full sequence is Zinc finger protein 768 (568 aa).

Residues 1 to 16 (MEREASSWGLESRDVH) show a composition bias toward basic and acidic residues. Disordered regions lie at residues 1–223 (MERE…SLGV), 228–247 (SFTQ…FDMP), and 264–287 (LNLT…QGPR). Phosphoserine occurs at positions 17, 23, and 27. Position 35 is a phosphothreonine (Thr35). 13 positions are modified to phosphoserine: Ser36, Ser65, Ser72, Ser79, Ser86, Ser93, Ser100, Ser107, Ser114, Ser121, Ser128, Ser135, and Ser149. Positions 62–80 (EPQSPEFEPQSPEFESQSP) are enriched in low complexity. Polar residues predominate over residues 110–122 (SDPQSPEFESQSP). Tyr152 carries the post-translational modification Phosphotyrosine. At Ser154 the chain carries Phosphoserine. Over residues 159 to 186 (FESQSPGYESQSPGYEPQNSGDGVQNSE) the composition is skewed to polar residues. Residue Thr189 is modified to Phosphothreonine. Ser191 carries the post-translational modification Phosphoserine. A C2H2-type 1 zinc finger spans residues 289–311 (NICGICGKSFGRGSTLIQHQRIH). Residue Thr312 is modified to Phosphothreonine. Tyr317 bears the Phosphotyrosine mark. 4 consecutive C2H2-type zinc fingers follow at residues 317–339 (YKCE…QRTH), 345–367 (YKCP…QRTH), 373–395 (YKCP…QRTH), and 401–423 (YSCP…QRVH). A phosphoserine mark is found at Ser323 and Ser327. The residue at position 424 (Thr424) is a Phosphothreonine. 5 consecutive C2H2-type zinc fingers follow at residues 429–451 (FSCG…ARSH), 457–479 (FKCP…ARTH), 485–507 (YSCP…QRSH), 513–535 (YRCA…HRVH), and 541–563 (YKCD…QRTH). The residue at position 470 (Ser470) is a Phosphoserine.

Belongs to the krueppel C2H2-type zinc-finger protein family. In terms of assembly, interacts (via zinc-finger domains) with TP53 (via N-terminus); interaction might be facilitated by TP53 oligomerization state. Interacts with ELP3. May be phosphorylated at residue 'Ser-5' of the tandem heptapeptide repeats in the N-terminus. Phosphorylation might be increased upon RAS pathway activation and negatively regulate protein stability.

It is found in the nucleus. Its subcellular location is the chromosome. In terms of biological role, binds to mammalian-wide interspersed repeat (MIRs) sequences in euchromatin and promoter regions of genes at the consensus sequence 5'-GCTGTGTG-[N20]-CCTCTCTG-3', consisting of two anchor regions connected by a linker region; the linker region probably does not contribute to the binding specificity. Required for cell homeostasis. May be involved in transcriptional regulation. The polypeptide is Zinc finger protein 768 (Znf768) (Mus musculus (Mouse)).